A 159-amino-acid chain; its full sequence is Transcription elongation factor A protein-like 1 (159 aa).

The segment at 1–121 (MDKPRKENEE…QFKGDIHGRN (121 aa)) is disordered. Positions 17 to 34 (KTDEERPPVEHSPEKQSP) are enriched in basic and acidic residues. Positions 37 to 54 (QSSEEQSSEEEFFPEELL) are enriched in acidic residues. Composition is skewed to basic and acidic residues over residues 64 to 80 (SEERPPQEGLSRKDLFE) and 95 to 119 (HKLEEGSFKERLARSRPQFKGDIHG).

This sequence belongs to the TFS-II family. TFA subfamily.

It localises to the nucleus. Functionally, may be involved in transcriptional regulation. Modulates various viral and cellular promoters in a promoter context-dependent manner. Does not bind DNA directly. In Gorilla gorilla gorilla (Western lowland gorilla), this protein is Transcription elongation factor A protein-like 1.